Consider the following 488-residue polypeptide: Ribulose bisphosphate carboxylase large chain 1 (488 aa).

Positions 128 and 178 each coordinate substrate. Catalysis depends on lysine 180, which acts as the Proton acceptor. Substrate is bound at residue lysine 182. Mg(2+) is bound by residues lysine 206, aspartate 208, and glutamate 209. Lysine 206 is subject to N6-carboxylysine. Histidine 298 acts as the Proton acceptor in catalysis. Substrate is bound by residues arginine 299, histidine 331, and serine 383.

Belongs to the RuBisCO large chain family. Type I subfamily. In terms of assembly, heterohexadecamer of 8 large chains and 8 small chains. Mg(2+) serves as cofactor.

It carries out the reaction 2 (2R)-3-phosphoglycerate + 2 H(+) = D-ribulose 1,5-bisphosphate + CO2 + H2O. It catalyses the reaction D-ribulose 1,5-bisphosphate + O2 = 2-phosphoglycolate + (2R)-3-phosphoglycerate + 2 H(+). Functionally, ruBisCO catalyzes two reactions: the carboxylation of D-ribulose 1,5-bisphosphate, the primary event in carbon dioxide fixation, as well as the oxidative fragmentation of the pentose substrate. Both reactions occur simultaneously and in competition at the same active site. In Methylibium petroleiphilum (strain ATCC BAA-1232 / LMG 22953 / PM1), this protein is Ribulose bisphosphate carboxylase large chain 1.